The chain runs to 380 residues: 3-isopropylmalate dehydratase large subunit (380 aa).

3 residues coordinate [4Fe-4S] cluster: C262, C320, and C323.

The protein belongs to the aconitase/IPM isomerase family. LeuC type 2 subfamily. Heterodimer of LeuC and LeuD. It depends on [4Fe-4S] cluster as a cofactor.

It carries out the reaction (2R,3S)-3-isopropylmalate = (2S)-2-isopropylmalate. It functions in the pathway amino-acid biosynthesis; L-leucine biosynthesis; L-leucine from 3-methyl-2-oxobutanoate: step 2/4. In terms of biological role, catalyzes the isomerization between 2-isopropylmalate and 3-isopropylmalate, via the formation of 2-isopropylmaleate. The protein is 3-isopropylmalate dehydratase large subunit of Pyrococcus horikoshii (strain ATCC 700860 / DSM 12428 / JCM 9974 / NBRC 100139 / OT-3).